Consider the following 281-residue polypeptide: Lectin (281 aa).

An N-terminal signal peptide occupies residues 1-26 (MATYKLCSVLALSLTLFLLILNKVNS). Asparagine 43 and asparagine 139 each carry an N-linked (GlcNAc...) asparagine glycan. Positions 269–281 (AVIPTSNHNTFAI) are excised as a propeptide.

It belongs to the leguminous lectin family. Homodimer. Post-translationally, a minor C-terminal proteolytic processing site is observed at position 268.

Its function is as follows. Galactose and N-acetyllactosamine specific lectin. Binds to the H-2 blood type determinant fucosyl-N-acetyllactosamine. This is Lectin from Erythrina corallodendron (Coral tree).